A 342-amino-acid polypeptide reads, in one-letter code: Glycerol-3-phosphate dehydrogenase [NAD(P)+] (342 aa).

The NADPH site is built by Ser-13, Trp-14, and Lys-108. Residues Lys-108, Gly-139, and Ser-141 each coordinate sn-glycerol 3-phosphate. Residue Ala-143 participates in NADPH binding. Residues Lys-194, Asp-247, Ser-257, Arg-258, and Asn-259 each contribute to the sn-glycerol 3-phosphate site. Lys-194 (proton acceptor) is an active-site residue. Arg-258 serves as a coordination point for NADPH. Positions 282 and 284 each coordinate NADPH.

This sequence belongs to the NAD-dependent glycerol-3-phosphate dehydrogenase family.

It localises to the cytoplasm. The catalysed reaction is sn-glycerol 3-phosphate + NAD(+) = dihydroxyacetone phosphate + NADH + H(+). It catalyses the reaction sn-glycerol 3-phosphate + NADP(+) = dihydroxyacetone phosphate + NADPH + H(+). The protein operates within membrane lipid metabolism; glycerophospholipid metabolism. Catalyzes the reduction of the glycolytic intermediate dihydroxyacetone phosphate (DHAP) to sn-glycerol 3-phosphate (G3P), the key precursor for phospholipid synthesis. The protein is Glycerol-3-phosphate dehydrogenase [NAD(P)+] of Lactococcus lactis subsp. cremoris (strain MG1363).